Reading from the N-terminus, the 193-residue chain is Ion-translocating oxidoreductase complex subunit A (193 aa).

6 consecutive transmembrane segments (helical) span residues 5–25 (LLLF…FLGL), 47–67 (FVMT…LIPL), 72–92 (LRTL…EMVV), 102–122 (LLGI…VALL), 134–154 (ALYG…FAAI), and 171–191 (AIAL…SGLV).

This sequence belongs to the NqrDE/RnfAE family. In terms of assembly, the complex is composed of six subunits: RsxA, RsxB, RsxC, RsxD, RsxE and RsxG.

Its subcellular location is the cell inner membrane. Functionally, part of a membrane-bound complex that couples electron transfer with translocation of ions across the membrane. Required to maintain the reduced state of SoxR. This is Ion-translocating oxidoreductase complex subunit A from Salmonella agona (strain SL483).